A 606-amino-acid chain; its full sequence is Granule-bound starch synthase 1, chloroplastic/amyloplastic (606 aa).

The N-terminal 76 residues, 1–76 (MSALTTSQLA…GSRRFPSVVV (76 aa)), are a transit peptide targeting the chloroplast. The disordered stretch occupies residues 29–67 (RHGFQGLKPRSPAGGDASSLSVTTSARATPKQQRSVQRG). Positions 46 to 66 (SSLSVTTSARATPKQQRSVQR) are enriched in polar residues. K97 contributes to the ADP-alpha-D-glucose binding site.

This sequence belongs to the glycosyltransferase 1 family. Bacterial/plant glycogen synthase subfamily.

Its subcellular location is the plastid. The protein resides in the chloroplast. The protein localises to the amyloplast. The enzyme catalyses an NDP-alpha-D-glucose + [(1-&gt;4)-alpha-D-glucosyl](n) = [(1-&gt;4)-alpha-D-glucosyl](n+1) + a ribonucleoside 5'-diphosphate + H(+). It functions in the pathway glycan biosynthesis; starch biosynthesis. In terms of biological role, required for the synthesis of amylose in endosperm. This is Granule-bound starch synthase 1, chloroplastic/amyloplastic (WAXY) from Oryza sativa (Rice).